The following is a 147-amino-acid chain: Transthyretin (147 aa).

The signal sequence occupies residues 1 to 20; sequence MASRRLLLLCLAGLVLVTEA. Position 30 is a sulfocysteine (C30). K35 contributes to the L-thyroxine binding site. Residue E62 is modified to 4-carboxyglutamate. Residue E74 participates in L-thyroxine binding. N118 carries N-linked (GlcNAc...) asparagine glycosylation. S137 lines the L-thyroxine pocket.

This sequence belongs to the transthyretin family. In terms of assembly, homotetramer. Dimer of dimers. In the homotetramer, subunits assemble around a central channel that can accommodate two ligand molecules. Interacts with RBP4. In terms of processing, sulfonation of the reactive cysteine Cys-30 enhances the stability of the native conformation of TTR, avoiding misassembly of the protein leading to amyloid formation. As to expression, detected in serum (at protein level). Detected in liver.

It localises to the secreted. Its function is as follows. Thyroid hormone-binding protein. Probably transports thyroxine from the bloodstream to the brain. This chain is Transthyretin (TTR), found in Sorex araneus (Eurasian common shrew).